The chain runs to 591 residues: V-type ATP synthase alpha chain (591 aa).

ATP is bound at residue 242-249 (GPFGAGKT).

The protein belongs to the ATPase alpha/beta chains family.

It catalyses the reaction ATP + H2O + 4 H(+)(in) = ADP + phosphate + 5 H(+)(out). Functionally, produces ATP from ADP in the presence of a proton gradient across the membrane. The V-type alpha chain is a catalytic subunit. The polypeptide is V-type ATP synthase alpha chain (Chlamydia trachomatis serovar L2 (strain ATCC VR-902B / DSM 19102 / 434/Bu)).